The following is a 95-amino-acid chain: Large ribosomal subunit protein eL42 (95 aa).

Cysteine 11, cysteine 14, cysteine 71, and cysteine 74 together coordinate Zn(2+). A C4-type zinc finger spans residues 11–74; the sequence is CPRCNTHTEH…QVLVITCTVC (64 aa).

Belongs to the eukaryotic ribosomal protein eL42 family. In terms of assembly, part of the 50S ribosomal subunit. Requires Zn(2+) as cofactor.

Binds to the 23S rRNA. The polypeptide is Large ribosomal subunit protein eL42 (Aeropyrum pernix (strain ATCC 700893 / DSM 11879 / JCM 9820 / NBRC 100138 / K1)).